Consider the following 376-residue polypeptide: Queuine tRNA-ribosyltransferase (376 aa).

Aspartate 93 acts as the Proton acceptor in catalysis. Residues 93–97 (DSGGF), aspartate 147, glutamine 190, and glycine 217 contribute to the substrate site. Positions 248-254 (GVGTPDD) are RNA binding. Aspartate 267 serves as the catalytic Nucleophile. The RNA binding; important for wobble base 34 recognition stretch occupies residues 272-276 (TRSGR).

The protein belongs to the queuine tRNA-ribosyltransferase family. Homodimer. Within each dimer, one monomer is responsible for RNA recognition and catalysis, while the other monomer binds to the replacement base PreQ1.

It carries out the reaction 7-aminomethyl-7-carbaguanine + guanosine(34) in tRNA = 7-aminomethyl-7-carbaguanosine(34) in tRNA + guanine. It participates in tRNA modification; tRNA-queuosine biosynthesis. Functionally, catalyzes the base-exchange of a guanine (G) residue with the queuine precursor 7-aminomethyl-7-deazaguanine (PreQ1) at position 34 (anticodon wobble position) in tRNAs with GU(N) anticodons (tRNA-Asp, -Asn, -His and -Tyr). Catalysis occurs through a double-displacement mechanism. The nucleophile active site attacks the C1' of nucleotide 34 to detach the guanine base from the RNA, forming a covalent enzyme-RNA intermediate. The proton acceptor active site deprotonates the incoming PreQ1, allowing a nucleophilic attack on the C1' of the ribose to form the product. After dissociation, two additional enzymatic reactions on the tRNA convert PreQ1 to queuine (Q), resulting in the hypermodified nucleoside queuosine (7-(((4,5-cis-dihydroxy-2-cyclopenten-1-yl)amino)methyl)-7-deazaguanosine). The polypeptide is Queuine tRNA-ribosyltransferase (Rhizobium meliloti (strain 1021) (Ensifer meliloti)).